The sequence spans 33 residues: Photosystem II reaction center protein Psb30 (33 aa).

Residues 5-25 (LIAQLTFLTSIIVSGPLVIAL) traverse the membrane as a helical segment.

It belongs to the Psb30/Ycf12 family. PSII is composed of 1 copy each of membrane proteins PsbA, PsbB, PsbC, PsbD, PsbE, PsbF, PsbH, PsbI, PsbJ, PsbK, PsbL, PsbM, PsbT, PsbX, PsbY, PsbZ, Psb30/Ycf12, peripheral proteins of the oxygen-evolving complex and a large number of cofactors. It forms dimeric complexes.

Its subcellular location is the plastid. It localises to the chloroplast thylakoid membrane. In terms of biological role, a core subunit of photosystem II (PSII), probably helps stabilize the reaction center. This chain is Photosystem II reaction center protein Psb30, found in Psilotum nudum (Whisk fern).